An 857-amino-acid chain; its full sequence is MAFPAPAFSLANLLNGSYGVDTPEDVERLRSEQREEAAAACRNYRPLPAVDVSESVTEDAHSLRTPDGAPAEAVSDEFVTYGAEDYLEKSDDELLVAFETMVKPMRIGQLWCPAFNKCSFISSIAMARALLLAPRTSHRTMKCFEDLVAAIYTKSDFYYSEECEADDAQIDISSRDVPGYSFEPWSRTSGFEPPPICEACDMIMYQCPCFDFNALKKSCAERTFADDYVIEGLDGVVDNATLLSNLGPFLVPVKCQYEKCPTPTIAIPPDLNRATDRVDINLVQSICDSTLPTHSNYDDSFHQVFVESADYSIDLDHVRLRQSDLIAKIPDSGHMIPVLNTGSGHKRVGTTKEVLTAIKKRNADVPELGDSVNLSRLSKAVAERFFISYINGNSLASSNFVNVVSNFHDYMEKWKSSGLSYDDLPDLHAENLQFYDHMIKSDVKPVVSDTLNIDRPVPATITYHKKSITSQFSPLFTALFERFQRCLRERIILPVGKISSLEMAGFDVKNKHCLEIDLSKFDKSQGEFHLLIQEHILNGLGCPAPITKWWCDFHRFSYIRDRRAGVGMPISFQRRTGDALTYFGNTIVTMAEFAWCYDTDQFEKLLFSGDDSLGFSLLPPVGDPSKFTTLFNMEAKVMEPAVPYICSKFLLSDEFGNTFSVPDPLREVQRLGTKKIPYSDNDEFLFAHFMSFVDRLKFLDRMSQSCIDQLSIFFELKYKKSGEEAALMLGAFKKYTANFQSYKELYYSDRRQCELINSFCSTEFRVERVNSNKQRKNYGIERRCNDKRRTPTGSYGGGEEAETKVSQTESTGTRSQKSQRESAFKSQTIPLPTVLSSGWFGTDRVMPPCERGGVTRV.

The region spanning 511-624 is the RdRp catalytic domain; the sequence is KHCLEIDLSK…FSLLPPVGDP (114 aa). Positions 780 to 789 are enriched in basic and acidic residues; sequence IERRCNDKRR. The interval 780–827 is disordered; the sequence is IERRCNDKRRTPTGSYGGGEEAETKVSQTESTGTRSQKSQRESAFKSQ. Over residues 804 to 816 the composition is skewed to polar residues; the sequence is KVSQTESTGTRSQ.

It belongs to the ssRNA positive-strand viruses RNA-directed RNA polymerase family. As to quaternary structure, interacts with replication protein 1a.

It catalyses the reaction RNA(n) + a ribonucleoside 5'-triphosphate = RNA(n+1) + diphosphate. In terms of biological role, RNA-dependent RNA polymerase which replicates the viral genome composed of 3 RNA segments, RNA1, RNA2 and RNA3. This Cucumber mosaic virus (strain FNY) (CMV) protein is RNA-directed RNA polymerase 2a.